Here is a 1409-residue protein sequence, read N- to C-terminus: MWSLTASEGESTTAHFFLGAGDEGLGTRGIGMRPEESDSELLEDEEDEVPPEPQIIVGICAMTKKSKSKPMTQILERLCRFDYLTVIILGEDVILNEPVENWPSCHCLISFHSKGFPLDKAVAYSKLRNPFLINDLAMQYYIQDRREVYRILQEEGIDLPRYAVLNRDPARPEECNLIEGEDQVEVNGAVFPKPFVEKPVSAEDHNVYIYYPSSAGGGSQRLFRKIGSRSSVYSPESIVRKTGSYIYEEFMPTDGTDVKVYAVGPDYAHAEARKSPALDGKVERDSEGKEIRYPVMLTAMEKLVARKVCVAFRQTVCGFDLLRANGHSFVCDVNGFSFVKNSMKYYDDCAKILGNTIMRELAPQFQIPWSIPTEAEDIPIVPTTSGTMMELRCVIAIIRHGDRTPKQKMKMEVKHPRFFALFEKHGGYKTGKLKLKRPEQLQEVLDITRLLLAELEKEPGGEIEEKTGKLEQLKSVLEMYGHFSGINRKVQSTYYPHGVKASNEGQDPQRETLAPSLLLVLKWGGELTPAGRVQAEELGRAFRCMYPGGQGDYAGFPGCGLLRLHSTFRHDLKIYASDEGRVQMTAAAFAKGLLALEGELTPILVQMVKSANMNGLLDSDGDSLSSCQHRVKARLHHILQQDAPFGPEDYDELAPTRSTSLLNSMTVIQNPVKVCDQVFALIENLTHQIRERMQDPRSVDLQLYHSETLELMLQRWSKLERDFRQKSGRYDISKIPDIYDCVKYDVQHNGSLGLQGAAELLRLSKALADVVIPQEYGISREEKLEIAVGFCLPLLRKILLDLQRTHEDESVNKLHPLESHVHSLLSVFRYGGLLDETQDAQWQRALDYLSAISELNYMTQIVIMLYEDNTQDPLSEERFHVELHFSPGVKGVEEEGSAPAGCGFRPASSENEEMKTNEGSMENLCPGKASDEPDRALQTSPQPPEGPGLPRRSPLIRNRKAGSMEVLSETSSSRPGGYRLFSSSRPPTEMKQSGLGSQCTGLFSTTVLGGSFSAPNLQDYARSHGKKLPPASLKHRDELLFVPAVKRFSVSFAKHPTNGFEGCSMVPTIYPLETLHNALSLHQVSEFLSRVCQRHTDAQAQASAALFDSMHSSQASDNPFSPPRTLHSPPLQLQQRSEKPPWYSSGPSSTVSSAGPSSPTTVDGNSQFGFSDQPSLNSHVAEEHQGLGLLLETPGSGAQELSIEGEQELFEPNQSPQVPPVETSQPYEEVSQPCQEVPDISQPCQDISEALSQPCQEVPDISQQCQENHDNGNHTCQEVPHISQPCQKSSQLCQKVSEEVCQLCLENSEEVSQPCQGVSVEVGKLVHKFHVGVGSLVQETLVEVGSPAEEIPEEVIQPYQGFSVEVGRLAQEASAINLLSQGIPEIDKPSQEFPEEIDLQAQEVPEEIN.

64–65 (KK) is a substrate binding site. ATP is bound by residues Arg-145, Lys-198, His-205, Arg-224, 248–251 (EEFM), and 257–259 (DVK). 224–225 (RK) is a binding site for substrate. Substrate contacts are provided by Lys-259 and Arg-273. ATP-binding positions include Ser-275, Asp-320, and 332–334 (DVN). 337 to 340 (SFVK) contacts substrate. Residues 382–453 (PTTSGTMMEL…VLDITRLLLA (72 aa)) form a polyphosphoinositide-binding domain region. A disordered region spans residues 891–996 (GVEEEGSAPA…PTEMKQSGLG (106 aa)). A phosphoserine mark is found at Ser-920 and Ser-963. Polar residues predominate over residues 981-996 (FSSSRPPTEMKQSGLG). Ser-1013 and Ser-1049 each carry phosphoserine. Positions 1110–1119 (MHSSQASDNP) are enriched in polar residues. The interval 1110–1183 (MHSSQASDNP…PSLNSHVAEE (74 aa)) is disordered. Residues Ser-1121 and Ser-1128 each carry the phosphoserine modification. Residues 1144 to 1162 (SSGPSSTVSSAGPSSPTTV) are compositionally biased toward low complexity. The segment covering 1163–1178 (DGNSQFGFSDQPSLNS) has biased composition (polar residues).

Belongs to the histidine acid phosphatase family. VIP1 subfamily.

The protein localises to the cytoplasm. Its subcellular location is the cytosol. It localises to the cell membrane. It catalyses the reaction 1D-myo-inositol hexakisphosphate + ATP = 1-diphospho-1D-myo-inositol 2,3,4,5,6-pentakisphosphate + ADP. The enzyme catalyses 5-diphospho-1D-myo-inositol 1,2,3,4,6-pentakisphosphate + ATP + H(+) = 1,5-bis(diphospho)-1D-myo-inositol 2,3,4,6-tetrakisphosphate + ADP. Bifunctional inositol kinase that acts in concert with the IP6K kinases IP6K1, IP6K2 and IP6K3 to synthesize the diphosphate group-containing inositol pyrophosphates diphosphoinositol pentakisphosphate, PP-InsP5, and bis-diphosphoinositol tetrakisphosphate, (PP)2-InsP4. PP-InsP5 and (PP)2-InsP4, also respectively called InsP7 and InsP8, regulate a variety of cellular processes, including apoptosis, vesicle trafficking, cytoskeletal dynamics, exocytosis, insulin signaling and neutrophil activation. Phosphorylates inositol hexakisphosphate (InsP6) at position 1 to produce PP-InsP5 which is in turn phosphorylated by IP6Ks to produce (PP)2-InsP4. Alternatively, phosphorylates PP-InsP5 at position 1, produced by IP6Ks from InsP6, to produce (PP)2-InsP4. Activated when cells are exposed to hyperosmotic stress. The protein is Inositol hexakisphosphate and diphosphoinositol-pentakisphosphate kinase 1 of Pongo abelii (Sumatran orangutan).